We begin with the raw amino-acid sequence, 339 residues long: Phenylalanine--tRNA ligase alpha subunit (339 aa).

Mg(2+) is bound at residue glutamate 254.

It belongs to the class-II aminoacyl-tRNA synthetase family. Phe-tRNA synthetase alpha subunit type 1 subfamily. Tetramer of two alpha and two beta subunits. It depends on Mg(2+) as a cofactor.

The protein resides in the cytoplasm. The enzyme catalyses tRNA(Phe) + L-phenylalanine + ATP = L-phenylalanyl-tRNA(Phe) + AMP + diphosphate + H(+). This is Phenylalanine--tRNA ligase alpha subunit from Dictyoglomus thermophilum (strain ATCC 35947 / DSM 3960 / H-6-12).